We begin with the raw amino-acid sequence, 264 residues long: S-adenosylmethionine decarboxylase proenzyme (264 aa).

Ser-112 functions as the Schiff-base intermediate with substrate; via pyruvic acid in the catalytic mechanism. Ser-112 is subject to Pyruvic acid (Ser); by autocatalysis. Catalysis depends on His-117, which acts as the Proton acceptor; for processing activity. Cys-140 functions as the Proton donor; for catalytic activity in the catalytic mechanism.

The protein belongs to the prokaryotic AdoMetDC family. Type 2 subfamily. As to quaternary structure, heterooctamer of four alpha and four beta chains arranged as a tetramer of alpha/beta heterodimers. Requires pyruvate as cofactor. In terms of processing, is synthesized initially as an inactive proenzyme. Formation of the active enzyme involves a self-maturation process in which the active site pyruvoyl group is generated from an internal serine residue via an autocatalytic post-translational modification. Two non-identical subunits are generated from the proenzyme in this reaction, and the pyruvate is formed at the N-terminus of the alpha chain, which is derived from the carboxyl end of the proenzyme. The post-translation cleavage follows an unusual pathway, termed non-hydrolytic serinolysis, in which the side chain hydroxyl group of the serine supplies its oxygen atom to form the C-terminus of the beta chain, while the remainder of the serine residue undergoes an oxidative deamination to produce ammonia and the pyruvoyl group blocking the N-terminus of the alpha chain.

The enzyme catalyses S-adenosyl-L-methionine + H(+) = S-adenosyl 3-(methylsulfanyl)propylamine + CO2. It participates in amine and polyamine biosynthesis; S-adenosylmethioninamine biosynthesis; S-adenosylmethioninamine from S-adenosyl-L-methionine: step 1/1. In terms of biological role, catalyzes the decarboxylation of S-adenosylmethionine to S-adenosylmethioninamine (dcAdoMet), the propylamine donor required for the synthesis of the polyamines spermine and spermidine from the diamine putrescine. In Salmonella typhi, this protein is S-adenosylmethionine decarboxylase proenzyme.